We begin with the raw amino-acid sequence, 2148 residues long: MNHVTIKQSDTRADPFRVFIFGDQSSCNLSNLQLLLFKKSNVYLASFIDQVNLTLRHEVARLTAAERQSFPAFSSVQNLVARALKKDTSVALESTLATIYHLCCFINYFGDGQEAYPTGPTTHVSGLCIGALAAAAVSSSKSLAELVQAGIDAVRVSLKVGLLVARTAALFSHQESNGTSSPPWSYAVPDSQLPLALAEEAIESYQAKTNIPPLSLPYISAKGQNSWTASGPPAIVQHFLETSQFEKTLRLTPLAVHAPYHAPHIFSAIDVQHIIRAVGPVSSFSSKLSFISSSSSRNLATGLKFQDLLYRAVEDILILPLDLREAAENIRLVLEATDNVQQCALFPISTGVGPSLKQSFSPAMASRVSIVDCIMERVAADAGPKSTSGPKPSESKIAIIGMSGRFPESADVEAFWDLLHQGLDVHRPVPPDRFNGELYYDVTGKRKNTCKVMHGCWINDPGLFDAKFFNISPKEAEQSDPGQRLALATAYEALEAAGVVADRTPSTQRDRVGVFYGMTSDDYREVSCGQNVDTYFIPGGNRAFTPGKINYFFKYCGPSVSVDTACSSSLAAIHLACNSIWRNECDTAIAGGTNVMSNPDSFVGLDRGYFLSRTGNCHTFDDEADGYCRADAVGTVILKRLEDAIADHDPILGVISGALTNHSADAVSITRPHSGAQEEIFSKLLTESGVHPHQVSYIEMHGTGTQAGDATEMTSVLNCFAPSTSTRRLPHESLHLGSTKANVGHSESASGVSALIKVLLMMEKNIIPPHCGIKGKINHKFPTDLDERNVHIAKTATQWNRRNELNNIRRAFVNNFSAAGGNTALLVEDYPLLIADSSQPDGRTAHVVTVSAKSIKSLKGNLENLKKFVQKQASTEGFLPKLSYTTTARRMHHPFRVAIPAANSEQLLSALNEELTHDSYTCCSESPVAFVFSGQGSQYSAMGQHLLHFTIFRDEVHAYDILAQRHGFPSIMPLIDGSVDIEDLEPLVVQLGTVCVQMALASLWMALGMRPAYVVGHSLGHYAALKVAGVLTASDTIYLVATRARLLQNKCSRGSHAMLAIRSSAAEIQAHLDEGIHDIACINGPQDTVVSGCIDDIDRLSQKLMDKGIKATRVNVPFAFHSAQVDPILDELEAVASQVEFHAPRVAIGCPLLSKTFKAGETPSLEAKHIRRHCRETVNFLDVLRSAKDDGLVSEKTAWIEIGPHTVCSNLVKANINQDITAVPSLMRNKDGWQVLASSVATLYRQGSSVAWDEYHHDFEACKQVLRLPAYSWDNKLYWIDYVHDWLLTRGDPPVQAAASLPAPPSSFSTASVHRIVHESVEKGKLTLTAECEFTNEQLHEVVYGHLVNGNRVCSSSLYTDFGVTLGSYILEKYRPDLQGHAVDVQDMVVNKALVHKEGPTMLLRIDVVLDTTDSKAASMSIYSVNSKGNKTADHAQSSLHFEQPKVWLKSWDSTQYYVERSIEWLKEKADQGLNSRMSSGVIYKLFSSLVDYSTAYKGMQEAIVNTEDFEATALVRFQVDEGNFRCNPMWVDSCGQLAGFLMNGHAKTPKDQVFINHGWQYFRTVRKFSRDKTYRTYVRMRCVEGTTYAGDVYIFDDDGIVGVCGSITFQGIPRKVLNTAMPPPKSQNEAPVRSGPAKPAVKPPRSASSEHSGHFARHANIEPLKLDAALKSATTARNPMLPVFKIVAEEIGIPSAGVDNGLVFADYGVDSLLSLSISGRLREELDLDVESSAFETCATLADLAAHLGMDTFSADQSSGQSSSSGGLSPRSDSIGEMTSSATTPPSMSPRGSVSGSQCKDVCAILAEEIGVSMGEITNDTDLGALGMDSLMSLAVLSRLREELELDLEGDFFVSHPNFSSFKHMFQQGHGDEAEPETSAELKQYRATSTLLQGSPKSALYTLFLLPDGSGSSFSYAPINAVRKDVCVFGLNCPWLKSAEKLVQFGLKGLATLYVEEIRRRAPHGPYNLGGWSAGGICAYEAAIQFTREGETVERLILLDSPNPIGLEKLPARLFDFVNGLGLFGDGKAPDWLLAHFLAFIDALDEWKPVPWDKALGGSSPPPMTYILWAEDGICKGTDARPEYRDDDPREMKWLLENRTNFGGNNWDVLLGQQSLSIERIQDANHFTMLRKGKNTERVAAFIRSIFG.

An N-terminal acylcarrier protein transacylase domain (SAT) region spans residues 19–261 (FIFGDQSSCN…TPLAVHAPYH (243 aa)). The region spanning 394-829 (ESKIAIIGMS…GGNTALLVED (436 aa)) is the Ketosynthase family 3 (KS3) domain. Residues cysteine 566, histidine 701, and histidine 745 each act as for beta-ketoacyl synthase activity in the active site. The segment at 929-1233 (AFVFSGQGSQ…PSLMRNKDGW (305 aa)) is malonyl-CoA:ACP transacylase (MAT) domain. The active-site For acyl/malonyl transferase activity is serine 1018. Positions 1310-1624 (TASVHRIVHE…RKVLNTAMPP (315 aa)) are product template (PT) domain. The segment at 1314–1447 (HRIVHESVEK…SSLHFEQPKV (134 aa)) is N-terminal hotdog fold. One can recognise a PKS/mFAS DH domain in the interval 1314-1619 (HRIVHESVEK…FQGIPRKVLN (306 aa)). The active-site Proton acceptor; for dehydratase activity is the histidine 1346. Residues 1474–1619 (LNSRMSSGVI…FQGIPRKVLN (146 aa)) are C-terminal hotdog fold. Residue aspartate 1533 is the Proton donor; for dehydratase activity of the active site. The segment at 1619–1655 (NTAMPPPKSQNEAPVRSGPAKPAVKPPRSASSEHSGH) is disordered. Residues 1678 to 1752 (RNPMLPVFKI…DLAAHLGMDT (75 aa)) form the Carrier 1 domain. The residue at position 1712 (serine 1712) is an O-(pantetheine 4'-phosphoryl)serine. Over residues 1755 to 1790 (ADQSSGQSSSSGGLSPRSDSIGEMTSSATTPPSMSP) the composition is skewed to low complexity. Positions 1755 to 1796 (ADQSSGQSSSSGGLSPRSDSIGEMTSSATTPPSMSPRGSVSG) are disordered. One can recognise a Carrier 2 domain in the interval 1793–1870 (SVSGSQCKDV…SFKHMFQQGH (78 aa)). Serine 1830 carries the post-translational modification O-(pantetheine 4'-phosphoryl)serine. The tract at residues 1882–2146 (LKQYRATSTL…ERVAAFIRSI (265 aa)) is thioesterase (TE) domain. Serine 1973 (for thioesterase activity) is an active-site residue.

Functionally, polyketide synthase; part of the Pks1 gene cluster that mediates the biosynthesis of an anthraquinone derivative pigment that contributes to conidial pigmentation that provides protection from UV radiation, heat and cold stress. The polyketide synthase Pks1 produces 1-acetyl-2,4,6,8-tetrahydroxy-9,10-anthraquinone though condensation of acetyl-CoA with malonyl-CoA. The dehydratase EthD and the laccase Mlac1 further convert the anthraquinone derivative into the final conidial pigment. The polypeptide is Polyketide synthase 1 (Metarhizium brunneum (strain ARSEF 3297)).